The primary structure comprises 416 residues: UBX domain-containing protein 4 (416 aa).

Positions 273–350 (KAISECLLRV…EFGSKTMLLF (78 aa)) constitute a UBX domain. The disordered stretch occupies residues 376-402 (TRTTPSVNTINKSNPQGPSDNATSIKK). The segment covering 378-402 (TTPSVNTINKSNPQGPSDNATSIKK) has biased composition (polar residues).

It is found in the nucleus. It localises to the cytoplasm. Its function is as follows. Involved in CDC48-dependent protein degradation through the ubiquitin/proteasome pathway. This Saccharomyces cerevisiae (strain ATCC 204508 / S288c) (Baker's yeast) protein is UBX domain-containing protein 4 (UBX4).